The following is a 504-amino-acid chain: MEEFQGYLELDRFRQHDFLYPFIFREYSYALAHGHGLNRYMLLENIGYDNKSSLLIVKRLITTMYQQNYLIISANDSKQNPFFGYNKNLHSKILSEGFAIIVEIPFYLRLISSLEGAEIVRFYNLRSIHSIFPFLEEKFPHLNYSADILIPYPAHLEILVQTLRYRVKDASYLHLLRFFLHEYSNCNSLIITNKSISIFSKSNPRFFLFLYNSYLCEYESIFLFLRNQSSHLRLTSSGVLFERLCLYRKIEHFAEVFANDFPVIPCFLKDPFMHYVRYQGKSILASKDTPLLMNKWKSYLVNLWQCHFDVWSHAASIRINQLSKHSLDFLSYFSSVRRNPAVVRNQMLENSFLLNNAPNKLDTIVPIIPLIGSLAKAKFCNAVGHPISKLTRADLSDFEIINRFLHICRNLSHYYSGSSKKKNMYRIKYILRLSCVKTLARKHKSTARAFLKRVDSEFFQEFFTEEGGFISLIFPRASFALRRLYSGRVWYLDIIFINGLSNHE.

Belongs to the intron maturase 2 family. MatK subfamily.

It is found in the plastid. Its subcellular location is the chloroplast. Its function is as follows. Usually encoded in the trnK tRNA gene intron. Probably assists in splicing its own and other chloroplast group II introns. The chain is Maturase K from Quercus cerris (Turkey oak).